The primary structure comprises 274 residues: Centriolar and ciliogenesis-associated protein hyls-1 (274 aa).

Disordered stretches follow at residues 156–188 (RSSVDDEENIAESVSVGLSTETEQSELQKSSRP) and 255–274 (NNEDWKANHDKDWSPRPYID). A compositionally biased stretch (polar residues) spans 171 to 183 (VGLSTETEQSELQ). Residues 257-274 (EDWKANHDKDWSPRPYID) are compositionally biased toward basic and acidic residues.

The protein belongs to the HYLS1 family. Interacts with sas-4; leading to its localization into newly forming centrioles.

The protein resides in the cytoplasm. It localises to the cytoskeleton. It is found in the microtubule organizing center. The protein localises to the centrosome. Its subcellular location is the centriole. The protein resides in the cell projection. It localises to the cilium. Functionally, plays an important role in ciliogenesis. The chain is Centriolar and ciliogenesis-associated protein hyls-1 from Caenorhabditis elegans.